A 79-amino-acid chain; its full sequence is uncharacterized protein (79 aa).

This is an uncharacterized protein from Caenorhabditis elegans.